We begin with the raw amino-acid sequence, 585 residues long: Probable long-chain-fatty-acid--AMP ligase FadD30 (585 aa).

Belongs to the ATP-dependent AMP-binding enzyme family.

It participates in lipid metabolism; fatty acid biosynthesis. In terms of biological role, catalyzes the activation of long-chain fatty acids as acyl-adenylates (acyl-AMP), which are then transferred to a multifunctional polyketide synthase (PKS) for further chain extension. This chain is Probable long-chain-fatty-acid--AMP ligase FadD30 (fadD30), found in Mycobacterium tuberculosis (strain CDC 1551 / Oshkosh).